A 209-amino-acid polypeptide reads, in one-letter code: NADH-ubiquinone oxidoreductase subunit 9 (209 aa).

This sequence belongs to the complex I 30 kDa subunit family. Complex I is composed of about 30 different subunits.

The protein resides in the mitochondrion inner membrane. It catalyses the reaction a ubiquinone + NADH + 5 H(+)(in) = a ubiquinol + NAD(+) + 4 H(+)(out). Core subunit of the mitochondrial membrane respiratory chain NADH dehydrogenase (Complex I) that is believed to belong to the minimal assembly required for catalysis. Complex I functions in the transfer of electrons from NADH to the respiratory chain. The immediate electron acceptor for the enzyme is believed to be ubiquinone. The chain is NADH-ubiquinone oxidoreductase subunit 9 (nad9) from Dictyostelium citrinum (Slime mold).